The chain runs to 552 residues: CTP synthase (552 aa).

The segment at 1–270 (MTKYVFVTGG…DRIICDELKL (270 aa)) is amidoligase domain. Position 13 (serine 13) interacts with CTP. Serine 13 serves as a coordination point for UTP. Residues 14 to 19 (SLGKGI) and aspartate 71 contribute to the ATP site. Mg(2+)-binding residues include aspartate 71 and glutamate 144. CTP-binding positions include 151-153 (DIE), 191-196 (KTKPTQ), and lysine 227. UTP-binding positions include 191–196 (KTKPTQ) and lysine 227. A Glutamine amidotransferase type-1 domain is found at 295-547 (TIGMVGKYVD…VEAALANKQA (253 aa)). Glycine 356 lines the L-glutamine pocket. The active-site Nucleophile; for glutamine hydrolysis is cysteine 383. L-glutamine is bound by residues 384–387 (LGMQ), glutamate 407, and arginine 473. Catalysis depends on residues histidine 520 and glutamate 522.

It belongs to the CTP synthase family. In terms of assembly, homotetramer.

The enzyme catalyses UTP + L-glutamine + ATP + H2O = CTP + L-glutamate + ADP + phosphate + 2 H(+). It carries out the reaction L-glutamine + H2O = L-glutamate + NH4(+). It catalyses the reaction UTP + NH4(+) + ATP = CTP + ADP + phosphate + 2 H(+). The protein operates within pyrimidine metabolism; CTP biosynthesis via de novo pathway; CTP from UDP: step 2/2. With respect to regulation, allosterically activated by GTP, when glutamine is the substrate; GTP has no effect on the reaction when ammonia is the substrate. The allosteric effector GTP functions by stabilizing the protein conformation that binds the tetrahedral intermediate(s) formed during glutamine hydrolysis. Inhibited by the product CTP, via allosteric rather than competitive inhibition. Catalyzes the ATP-dependent amination of UTP to CTP with either L-glutamine or ammonia as the source of nitrogen. Regulates intracellular CTP levels through interactions with the four ribonucleotide triphosphates. This is CTP synthase from Burkholderia vietnamiensis (strain G4 / LMG 22486) (Burkholderia cepacia (strain R1808)).